The chain runs to 298 residues: GTPase Era (298 aa).

The region spanning 3-170 (KSGFVAILGR…IKLLTDNLEE (168 aa)) is the Era-type G domain. The segment at 11 to 18 (GRPNVGKS) is G1. A GTP-binding site is contributed by 11 to 18 (GRPNVGKS). The segment at 37–41 (QTTRN) is G2. Residues 58–61 (DTPG) form a G3 region. GTP is bound by residues 58-62 (DTPGI) and 120-123 (NKID). Residues 120 to 123 (NKID) form a G4 region. The interval 149–151 (ISA) is G5. A KH type-2 domain is found at 201-279 (TQQEVPHSVA…YLETWVKVKK (79 aa)).

Belongs to the TRAFAC class TrmE-Era-EngA-EngB-Septin-like GTPase superfamily. Era GTPase family. As to quaternary structure, monomer.

Its subcellular location is the cytoplasm. It is found in the cell membrane. Its function is as follows. An essential GTPase that binds both GDP and GTP, with rapid nucleotide exchange. Plays a role in 16S rRNA processing and 30S ribosomal subunit biogenesis and possibly also in cell cycle regulation and energy metabolism. This chain is GTPase Era, found in Streptococcus pyogenes serotype M3 (strain ATCC BAA-595 / MGAS315).